The sequence spans 686 residues: DNA ligase 2 (686 aa).

Residues 37-41, 86-87, and Glu-121 each bind NAD(+); these read DDEYD and SL. Catalysis depends on Lys-123, which acts as the N6-AMP-lysine intermediate. NAD(+) is bound by residues Arg-144, Glu-179, Lys-295, and Lys-319. Zn(2+) is bound by residues Cys-413, Cys-416, Cys-431, and Cys-436. One can recognise a BRCT domain in the interval 593-681; sequence VRGEQLAGLN…GVQLPGVQAS (89 aa).

The protein belongs to the NAD-dependent DNA ligase family. LigA subfamily. It depends on Mg(2+) as a cofactor. Mn(2+) is required as a cofactor.

The enzyme catalyses NAD(+) + (deoxyribonucleotide)n-3'-hydroxyl + 5'-phospho-(deoxyribonucleotide)m = (deoxyribonucleotide)n+m + AMP + beta-nicotinamide D-nucleotide.. Functionally, DNA ligase that catalyzes the formation of phosphodiester linkages between 5'-phosphoryl and 3'-hydroxyl groups in double-stranded DNA using NAD as a coenzyme and as the energy source for the reaction. It is essential for DNA replication and repair of damaged DNA. This chain is DNA ligase 2, found in Deinococcus deserti (strain DSM 17065 / CIP 109153 / LMG 22923 / VCD115).